The following is a 337-amino-acid chain: Phosphatidate cytidylyltransferase, mitochondrial (337 aa).

It belongs to the TAM41 family. Requires Mg(2+) as cofactor. In terms of tissue distribution, brain and liver.

It is found in the mitochondrion inner membrane. It catalyses the reaction a 1,2-diacyl-sn-glycero-3-phosphate + CTP + H(+) = a CDP-1,2-diacyl-sn-glycerol + diphosphate. It participates in phospholipid metabolism; CDP-diacylglycerol biosynthesis; CDP-diacylglycerol from sn-glycerol 3-phosphate: step 3/3. Catalyzes the conversion of phosphatidic acid (PA) to CDP-diacylglycerol (CDP-DAG), an essential intermediate in the synthesis of phosphatidylglycerol, cardiolipin and phosphatidylinositol. The protein is Phosphatidate cytidylyltransferase, mitochondrial (Tamm41) of Rattus norvegicus (Rat).